Reading from the N-terminus, the 172-residue chain is Scytalone dehydratase-like protein Arp1 (172 aa).

Y49 is a binding site for substrate. Active-site residues include H84 and H109. N130 provides a ligand contact to substrate.

This sequence belongs to the scytalone dehydratase family. In terms of assembly, homotrimer. Each subunit contains an active site, located in the central part of the hydrophobic core of the monomer, which functions independently.

Its function is as follows. Scytalone dehydratase-like protein; part of the Pks2 gene cluster that mediates the formation of infectious structures (appressoria), enabling these fungi to kill insects faster. The product of the Pks2 gene cluster is different from the one of Pks1 and has still not been identified. The protein is Scytalone dehydratase-like protein Arp1 of Metarhizium guizhouense (strain ARSEF 977).